Here is a 174-residue protein sequence, read N- to C-terminus: Crossover junction endodeoxyribonuclease RuvC (174 aa).

Active-site residues include aspartate 8, glutamate 67, and aspartate 139. Mg(2+) contacts are provided by aspartate 8, glutamate 67, and aspartate 139.

The protein belongs to the RuvC family. As to quaternary structure, homodimer which binds Holliday junction (HJ) DNA. The HJ becomes 2-fold symmetrical on binding to RuvC with unstacked arms; it has a different conformation from HJ DNA in complex with RuvA. In the full resolvosome a probable DNA-RuvA(4)-RuvB(12)-RuvC(2) complex forms which resolves the HJ. It depends on Mg(2+) as a cofactor.

Its subcellular location is the cytoplasm. It catalyses the reaction Endonucleolytic cleavage at a junction such as a reciprocal single-stranded crossover between two homologous DNA duplexes (Holliday junction).. The RuvA-RuvB-RuvC complex processes Holliday junction (HJ) DNA during genetic recombination and DNA repair. Endonuclease that resolves HJ intermediates. Cleaves cruciform DNA by making single-stranded nicks across the HJ at symmetrical positions within the homologous arms, yielding a 5'-phosphate and a 3'-hydroxyl group; requires a central core of homology in the junction. The consensus cleavage sequence is 5'-(A/T)TT(C/G)-3'. Cleavage occurs on the 3'-side of the TT dinucleotide at the point of strand exchange. HJ branch migration catalyzed by RuvA-RuvB allows RuvC to scan DNA until it finds its consensus sequence, where it cleaves and resolves the cruciform DNA. This is Crossover junction endodeoxyribonuclease RuvC from Pseudomonas putida (strain W619).